Consider the following 166-residue polypeptide: Disulfide bond reductase DsbH (166 aa).

An N-terminal signal peptide occupies residues Met1 to Ala22. Positions Leu32 to Arg166 constitute a Thioredoxin domain. A disulfide bond links Cys72 and Cys75. Residue Met73–Trp74 participates in substrate binding.

In terms of assembly, monomer.

It localises to the periplasm. In terms of biological role, catalyzes the reduction of disulfide bonds. May function in reducing intermolecular disulfides between proteins and small molecules in the periplasm, or keeping a specific subset of periplasmic proteins reduced, or maintaining the periplasm of Chlamydia in a generally reducing state. Seems to be unable to oxidize thiols into disulfides and does not display disulfide bond isomerase activity. This is Disulfide bond reductase DsbH (dsbH) from Chlamydia pneumoniae (Chlamydophila pneumoniae).